Consider the following 532-residue polypeptide: Flavin-containing monooxygenase 1 (532 aa).

Topologically, residues 1–510 (MVKRVAIVGA…TRTVQETPST (510 aa)) are lumenal. FAD contacts are provided by residues 9-13 (GAGVS), glutamate 32, 40-41 (LW), and 61-62 (NS). Residues 60-61 (SN) and 195-198 (SGTD) each bind NADP(+). A helical membrane pass occupies residues 511–531 (FETLLKLFSFLALLVAVFFIF). Residue leucine 532 is a topological domain, cytoplasmic.

This sequence belongs to the FMO family. Requires FAD as cofactor. In terms of tissue distribution, expressed in liver, lung and kidney and to a lesser extent in the heart and brain.

Its subcellular location is the endoplasmic reticulum membrane. It carries out the reaction hypotaurine + NADPH + O2 + H(+) = taurine + NADP(+) + H2O. It catalyses the reaction hypotaurine + NADH + O2 + H(+) = taurine + NAD(+) + H2O. The enzyme catalyses trimethylamine + NADPH + O2 = trimethylamine N-oxide + NADP(+) + H2O. The catalysed reaction is N,N-dimethylaniline + NADPH + O2 + H(+) = N,N-dimethylaniline N-oxide + NADP(+) + H2O. In terms of biological role, broad spectrum monooxygenase that catalyzes the oxygenation of a wide variety of nitrogen- and sulfur-containing compounds including xenobiotics. Catalyzes the S-oxygenation of hypotaurine to produce taurine, an organic osmolyte involved in cell volume regulation as well as a variety of cytoprotective and developmental processes. In vitro, catalyzes the N-oxygenation of trimethylamine (TMA) to produce trimethylamine N-oxide (TMAO) and could therefore participate to the detoxification of this compound that is generated by the action of gut microbiota from dietary precursors such as choline, choline containing compounds, betaine or L-carnitine. This chain is Flavin-containing monooxygenase 1, found in Rattus norvegicus (Rat).